Consider the following 216-residue polypeptide: Squamosa promoter-binding-like protein 13 (216 aa).

Positions 32-110 (GDGGAALPSP…PSGGGGGPRC (79 aa)) are disordered. Residues 67–91 (SSSAAVAAGASSSSSSSSVAAAARR) are compositionally biased toward low complexity. The segment covering 94–108 (GRAGGGAPSGGGGGP) has biased composition (gly residues). The segment at 107–184 (GPRCQVERCG…AGHNERRRKS (78 aa)) adopts an SBP-type zinc-finger fold. 8 residues coordinate Zn(2+): cysteine 110, cysteine 115, cysteine 132, histidine 135, cysteine 151, cysteine 154, histidine 158, and cysteine 170. The Bipartite nuclear localization signal signature appears at 167-183 (KRSCRRRLAGHNERRRK). The disordered stretch occupies residues 175–216 (AGHNERRRKSAADTAHGENCRHADQDAGRSHQGTGNPPFQIR). The span at 189–203 (AHGENCRHADQDAGR) shows a compositional bias: basic and acidic residues. Positions 205–216 (HQGTGNPPFQIR) are enriched in polar residues.

In terms of tissue distribution, ubiquitous.

The protein resides in the nucleus. In terms of biological role, trans-acting factor that binds specifically to the consensus nucleotide sequence 5'-TNCGTACAA-3'. May be involved in panicle development. The polypeptide is Squamosa promoter-binding-like protein 13 (SPL13) (Oryza sativa subsp. japonica (Rice)).